The primary structure comprises 2920 residues: Cadherin-related hmr-1 (2920 aa).

The N-terminal stretch at 1–19 is a signal peptide; the sequence is MSWNILLILLISNLDEVLA. Residues 20–2779 lie on the Extracellular side of the membrane; it reads KTLLKLPSNA…AVSKLGISSP (2760 aa). Asparagine 72, asparagine 243, asparagine 253, asparagine 339, and asparagine 508 each carry an N-linked (GlcNAc...) asparagine glycan. Cadherin domains are found at residues 322-422, 425-530, 531-642, 643-747, 749-865, 871-979, 980-1093, 1097-1211, 1212-1335, 1336-1436, 1438-1546, 1548-1661, 1662-1772, and 1772-1874; these read SSRS…PPSF, SPLP…PPQF, AKQE…VPTF, TRPL…SAVF, PTSQ…KPEF, YSDI…SPQF, ERPS…APKW, PDCK…VPQF, TVDL…APSF, EEQK…APQF, QQKY…SPIF, ERLF…APFF, EKTR…APHI, and IHGA…EPYT. N-linked (GlcNAc...) asparagine glycans are attached at residues asparagine 658, asparagine 685, asparagine 715, and asparagine 826. An N-linked (GlcNAc...) asparagine glycan is attached at asparagine 1177. A glycan (N-linked (GlcNAc...) asparagine) is linked at asparagine 1417. Asparagine 1646 carries N-linked (GlcNAc...) asparagine glycosylation. 3 N-linked (GlcNAc...) asparagine glycosylation sites follow: asparagine 1935, asparagine 2224, and asparagine 2232. An EGF-like 1 domain is found at 2246–2283; that stretch reads APPACQHSLCHNDGVCHNTNPGFFCECRNDGLKGARCQ. Disulfide bonds link cysteine 2250/cysteine 2261, cysteine 2255/cysteine 2270, and cysteine 2272/cysteine 2282. The 195-residue stretch at 2284-2478 folds into the Laminin G-like domain; that stretch reads GTTRSFGGNG…AFEQNSEKGC (195 aa). N-linked (GlcNAc...) asparagine glycans are attached at residues asparagine 2307 and asparagine 2332. Disulfide bonds link cysteine 2452–cysteine 2478, cysteine 2501–cysteine 2515, and cysteine 2517–cysteine 2526. The region spanning 2492–2527 is the EGF-like 2 domain; sequence SLNHCIHGDCFADVQGSGAMVAKCVCDPGWGGARCE. The N-linked (GlcNAc...) asparagine glycan is linked to asparagine 2623. The chain crosses the membrane as a helical span at residues 2780–2800; it reads AIILILVSLALLILLVMMMVV. The Cytoplasmic portion of the chain corresponds to 2801–2920; the sequence is YTRRSPGAFE…VTLESIESAQ (120 aa). Phosphoserine is present on serine 2839. The tract at residues 2858 to 2891 is disordered; the sequence is IGGHPPHYPPRGMAPPKDDHELNSKIKDLETDQN. The span at 2873 to 2887 shows a compositional bias: basic and acidic residues; it reads PKDDHELNSKIKDLE. Serine 2909 carries the post-translational modification Phosphoserine. Threonine 2912 bears the Phosphothreonine mark. Serine 2915 and serine 2918 each carry phosphoserine.

As to quaternary structure, monomer in solution. Isoform a is a component of a core catenin-cadherin complex consisting of hmr-1, hmp-1 and hmp-2; the complex localizes to adherens junctions. Isoform a interacts with hmp-2; the interaction is direct. Isoform a interacts (via intracellular domain) with jac-1. In terms of processing, phosphorylation at T-2912 increases the binding affinity for hmp-2. Sumoylated. Sumoylation prevents accumulation at adherens junctions and decreases the binding affinity for hmp-2. In terms of tissue distribution, expressed in epidermal cells (at protein level). Neuron-specific.

The protein resides in the cell membrane. The protein localises to the cell junction. It localises to the adherens junction. Its subcellular location is the cell projection. It is found in the dendrite. Its function is as follows. Cadherins are calcium-dependent cell adhesion proteins. They preferentially interact with themselves in a homophilic manner in connecting cells; cadherins may thus contribute to the sorting of heterogeneous cell types. Required for adherens junction assembly and connecting adherens junctions to the cytoskeleton. Functionally, isoform a is required for cell migration during body enclosure and cell shape changes during body elongation. Required for proper localization of other junctional components, such as hmp-1, hmp-2, jac-1 and pac-1. Recruitment of pac-1 is required to establish cell polarity, independent of its role in cell adhesion. Required for primodial germ cell ingression and adherence to endodermal cells during gastrulation. In terms of biological role, isoform b is involved in axonal guidance in a subset of motor neurons. The sequence is that of Cadherin-related hmr-1 from Caenorhabditis elegans.